The primary structure comprises 418 residues: Somatostatin receptor type 3 (418 aa).

Residues 1–21 (MDMLHPSSVSTTSEPENASSA) form a disordered region. Topologically, residues 1-43 (MDMLHPSSVSTTSEPENASSAWPPDATLGNVSAGPSPAGLAVS) are extracellular. Positions 7–20 (SSVSTTSEPENASS) are enriched in polar residues. N-linked (GlcNAc...) asparagine glycans are attached at residues asparagine 17 and asparagine 30. Residues 44–69 (GVLIPLVYLVVCVVGLLGNSLVIYVV) traverse the membrane as a helical segment. Residues 70–79 (LRHTASPSVT) lie on the Cytoplasmic side of the membrane. The chain crosses the membrane as a helical span at residues 80–101 (NVYILNLALADELFMLGLPFLA). Residues 102 to 116 (AQNALSYWPFGSLMC) lie on the Extracellular side of the membrane. A disulfide bridge links cysteine 116 with cysteine 191. A helical membrane pass occupies residues 117-138 (RLVMAVDGINQFTSIFCLTVMS). The Cytoplasmic portion of the chain corresponds to 139–161 (VDRYLAVVHPTRSARWRTAPVAR). Residues 162–181 (TVSAAVWVASAVVVLPVVVF) traverse the membrane as a helical segment. The Extracellular portion of the chain corresponds to 182–205 (SGVPRGMSTCHMQWPEPAAAWRAG). A helical transmembrane segment spans residues 206–231 (FIIYTAALGFFGPLLVICLCYLLIVV). The Cytoplasmic portion of the chain corresponds to 232–257 (KVRSAGRRVWAPSCQRRRRSERRVTR). Residues 258–279 (MVVAVVALFVLCWMPFYVLNIV) form a helical membrane-spanning segment. Residues 280-293 (NVVCPLPEEPAFFG) lie on the Extracellular side of the membrane. The helical transmembrane segment at 294–316 (LYFLVVALPYANSCANPILYGFL) threads the bilayer. The Cytoplasmic portion of the chain corresponds to 317 to 418 (SYRFKQGFRR…KSSTMRISYL (102 aa)). Residues serine 332 and serine 337 each carry the phosphoserine modification. Residues 335 to 418 (VRSQEPTVGP…KSSTMRISYL (84 aa)) form a disordered region. Phosphothreonine is present on threonine 348. Over residues 348–360 (TEEEDEEEEDGEE) the composition is skewed to acidic residues. Basic and acidic residues predominate over residues 361-371 (SREGGKGKEMN). 2 stretches are compositionally biased toward polar residues: residues 373–385 (RVSQ…TSGQ) and 395–418 (KEQQ…ISYL).

The protein belongs to the G-protein coupled receptor 1 family. In terms of assembly, homodimer and heterodimer with SSTR2. Heterodimerization with SSTR2 inactivates SSTR3 receptor function. Phosphorylated. Phosphorylation increases upon somatostatin binding. In terms of tissue distribution, brain, pituitary and pancreas.

Its subcellular location is the cell membrane. In terms of biological role, receptor for somatostatin-14 and -28. This receptor is coupled via pertussis toxin sensitive G proteins to inhibition of adenylyl cyclase. The polypeptide is Somatostatin receptor type 3 (SSTR3) (Homo sapiens (Human)).